The primary structure comprises 177 residues: MRVILLLLTLDVLGVSSMMTDKNLKKKIEGNWRTVYLAASSVEKINEGSPLRTYFRRIECGKRCNRINLYFYIKKGAKCQQFKIVGRRSQDVYYAKYEGSTAFMLKTVNEKILLFDYFNRNRRNDVTRVAGVLAKGRQLTKDEMTEYMNFVEEMGIEDENVQRVMDTDTCPNKIRIR.

An N-terminal signal peptide occupies residues 1–17 (MRVILLLLTLDVLGVSS). C79 and C170 form a disulfide bridge.

Belongs to the calycin superfamily. Lipocalin family. Prostatic epithelial cells.

It is found in the nucleus. The protein localises to the secreted. This is Probasin (Pbsn) from Rattus norvegicus (Rat).